We begin with the raw amino-acid sequence, 47 residues long: MAKGKRTFQPNNRRRARVHGFRLRMRTRAGRAIVSARRRKGRESLTA.

It belongs to the bacterial ribosomal protein bL34 family.

The polypeptide is Large ribosomal subunit protein bL34 (Rhodococcus opacus (strain B4)).